Reading from the N-terminus, the 266-residue chain is HLA class II histocompatibility antigen, DR beta 4 chain (266 aa).

The signal sequence occupies residues 1–29 (MVCLKLPGGSCMAALTVTLTVLSSPLALA). The interval 30-124 (GDTQPRFLEQ…VESFTVQRRV (95 aa)) is beta-1. Residues 30 to 227 (GDTQPRFLEQ…SARSESAQSK (198 aa)) are Extracellular-facing. Intrachain disulfides connect C44–C108 and C146–C202. N48 is a glycosylation site (N-linked (GlcNAc...) asparagine). Residues 125–227 (QPKVTVYPSK…SARSESAQSK (103 aa)) are beta-2. The Ig-like C1-type domain occupies 126-216 (PKVTVYPSKT…PSMMSPLTVQ (91 aa)). Residues 228-250 (MLSGVGGFVLGLLFLGTGLFIYF) traverse the membrane as a helical segment. The Cytoplasmic segment spans residues 251-266 (RNQKGHSGLQPTGLLS). K254 is covalently cross-linked (Glycyl lysine isopeptide (Lys-Gly) (interchain with G-Cter in ubiquitin)).

Belongs to the MHC class II family. Heterodimer of an alpha and a beta subunit; also referred as MHC class II molecule. In the endoplasmic reticulum (ER) it forms a heterononamer; 3 MHC class II molecules bind to a CD74 homotrimer (also known as invariant chain or HLA class II histocompatibility antigen gamma chain). In the endosomal/lysosomal system; CD74 undergoes sequential degradation by various proteases; leaving a small fragment termed CLIP on each MHC class II molecule. MHC class II molecule interacts with HLA_DM, and HLA_DO in B-cells, in order to release CLIP and facilitate the binding of antigenic peptides. Ubiquitinated by MARCH1 and MARCH8 at Lys-254 leading to sorting into the endosome system and down-regulation of MHC class II. When associated with ubiquitination of the alpha subunit of HLA-DR: HLA-DRA 'Lys-244', the down-regulation of MHC class II may be highly effective.

It is found in the cell membrane. The protein localises to the endoplasmic reticulum membrane. Its subcellular location is the golgi apparatus. It localises to the trans-Golgi network membrane. The protein resides in the endosome membrane. It is found in the lysosome membrane. The protein localises to the late endosome membrane. Its function is as follows. Binds peptides derived from antigens that access the endocytic route of antigen presenting cells (APC) and presents them on the cell surface for recognition by the CD4 T-cells. The peptide binding cleft accommodates peptides of 10-30 residues. The peptides presented by MHC class II molecules are generated mostly by degradation of proteins that access the endocytic route, where they are processed by lysosomal proteases and other hydrolases. Exogenous antigens that have been endocytosed by the APC are thus readily available for presentation via MHC II molecules, and for this reason this antigen presentation pathway is usually referred to as exogenous. As membrane proteins on their way to degradation in lysosomes as part of their normal turn-over are also contained in the endosomal/lysosomal compartments, exogenous antigens must compete with those derived from endogenous components. Autophagy is also a source of endogenous peptides, autophagosomes constitutively fuse with MHC class II loading compartments. In addition to APCs, other cells of the gastrointestinal tract, such as epithelial cells, express MHC class II molecules and CD74 and act as APCs, which is an unusual trait of the GI tract. To produce a MHC class II molecule that presents an antigen, three MHC class II molecules (heterodimers of an alpha and a beta chain) associate with a CD74 trimer in the ER to form a heterononamer. Soon after the entry of this complex into the endosomal/lysosomal system where antigen processing occurs, CD74 undergoes a sequential degradation by various proteases, including CTSS and CTSL, leaving a small fragment termed CLIP (class-II-associated invariant chain peptide). The removal of CLIP is facilitated by HLA-DM via direct binding to the alpha-beta-CLIP complex so that CLIP is released. HLA-DM stabilizes MHC class II molecules until primary high affinity antigenic peptides are bound. The MHC II molecule bound to a peptide is then transported to the cell membrane surface. In B-cells, the interaction between HLA-DM and MHC class II molecules is regulated by HLA-DO. Primary dendritic cells (DCs) also to express HLA-DO. Lysosomal microenvironment has been implicated in the regulation of antigen loading into MHC II molecules, increased acidification produces increased proteolysis and efficient peptide loading. The protein is HLA class II histocompatibility antigen, DR beta 4 chain (HLA-DRB4) of Homo sapiens (Human).